A 161-amino-acid chain; its full sequence is Vitamin K-dependent protein C (161 aa).

The 161-residue stretch at 1–161 (EKWELDLDIE…GCGLLHNYGV (161 aa)) folds into the Peptidase S1 domain. An N-linked (GlcNAc...) asparagine glycan is attached at Asn-17. Residue Asp-26 is the Charge relay system of the active site. Asn-82 carries N-linked (GlcNAc...) asparagine glycosylation. Intrachain disulfides connect Cys-100–Cys-114 and Cys-125–Cys-153. Ser-129 (charge relay system) is an active-site residue.

It belongs to the peptidase S1 family. As to expression, plasma; synthesized in the liver.

Its subcellular location is the secreted. The protein localises to the golgi apparatus. It localises to the endoplasmic reticulum. It carries out the reaction Degradation of blood coagulation factors Va and VIIIa.. Its function is as follows. Protein C is a vitamin K-dependent serine protease that regulates blood coagulation by inactivating factors Va and VIIIa in the presence of calcium ions and phospholipids. Exerts a protective effect on the endothelial cell barrier function. The chain is Vitamin K-dependent protein C (PROC) from Macaca mulatta (Rhesus macaque).